A 747-amino-acid chain; its full sequence is Myotubularin-related protein 12 (747 aa).

Residues 205 to 643 (FDTLKDWCWE…PEIKVWAQRY (439 aa)) form the Myotubularin phosphatase domain. Positions 449-558 (VPVFLLFLDC…KGQRKGMRFK (110 aa)) are interaction with MTM1. A phosphoserine mark is found at Ser564, Ser601, and Ser716.

It belongs to the protein-tyrosine phosphatase family. Non-receptor class myotubularin subfamily. In terms of assembly, heterodimer with lipid phosphatase MTM1. Heterodimer with lipid phosphatase MTMR2. In terms of tissue distribution, expressed in skeletal muscles (at protein level). Ubiquitous with prominent expression in brain, heart, kidney, placenta, and lung.

Its subcellular location is the cytoplasm. The protein localises to the sarcoplasmic reticulum. It localises to the myofibril. It is found in the sarcomere. Functionally, acts as an adapter for the myotubularin-related phosphatases. Regulates phosphatase MTM1 protein stability and possibly its intracellular location. By stabilizing MTM1 protein levels, required for skeletal muscle maintenance but not for myogenesis. The protein is Myotubularin-related protein 12 (MTMR12) of Homo sapiens (Human).